The chain runs to 432 residues: UDP-N-acetylmuramate--L-alanine ligase (432 aa).

ATP is bound at residue 108-114 (GAHGKTS).

The protein belongs to the MurCDEF family.

The protein resides in the cytoplasm. The enzyme catalyses UDP-N-acetyl-alpha-D-muramate + L-alanine + ATP = UDP-N-acetyl-alpha-D-muramoyl-L-alanine + ADP + phosphate + H(+). The protein operates within cell wall biogenesis; peptidoglycan biosynthesis. Functionally, cell wall formation. This Bacillus velezensis (strain DSM 23117 / BGSC 10A6 / LMG 26770 / FZB42) (Bacillus amyloliquefaciens subsp. plantarum) protein is UDP-N-acetylmuramate--L-alanine ligase.